A 311-amino-acid chain; its full sequence is Maspardin (311 aa).

Residues 86 to 159 (EFCDGFRKLL…NSFWLMPSFM (74 aa)) form the AB hydrolase-1 domain.

This sequence belongs to the AB hydrolase superfamily.

Its subcellular location is the cytoplasm. This Danio rerio (Zebrafish) protein is Maspardin (spg21).